Reading from the N-terminus, the 278-residue chain is MSRTNFDTLLEAGCHFGHLKRKWNPAMAPYIFMERNGIHIIDLHKTVAKVDEAAEALKQIAKSGKKVLFVATKKQAKQVVAEKAQSVNMPYVIERWPGGMLTNFPTIRKAVKKMATIDKLTNDGTYSNLSKREVLQISRQRAKLDKTLGSIADLTRLPSALFVIDVMKENIAVREANRLGIPVFGIVDTNSDPTNVDFVIPANDDATKSVEVILDACCAAMIEGLEERKAEKIDMEAAGEAPANKGKKKSVKARLDKSDEEAINAAKAAAFIKEDEEA.

Residues 233-257 (IDMEAAGEAPANKGKKKSVKARLDK) form a disordered region.

Belongs to the universal ribosomal protein uS2 family.

The sequence is that of Small ribosomal subunit protein uS2 from Bacteroides thetaiotaomicron (strain ATCC 29148 / DSM 2079 / JCM 5827 / CCUG 10774 / NCTC 10582 / VPI-5482 / E50).